The sequence spans 181 residues: Protein GrpE (181 aa).

Residues 1-13 are compositionally biased toward polar residues; it reads MENTQENPATQSA. The segment at 1 to 34 is disordered; sequence MENTQENPATQSAEDIGSAKQAAQGAAPAAEAAD. A compositionally biased stretch (low complexity) spans 19 to 34; sequence AKQAAQGAAPAAEAAD.

It belongs to the GrpE family. In terms of assembly, homodimer.

Its subcellular location is the cytoplasm. In terms of biological role, participates actively in the response to hyperosmotic and heat shock by preventing the aggregation of stress-denatured proteins, in association with DnaK and GrpE. It is the nucleotide exchange factor for DnaK and may function as a thermosensor. Unfolded proteins bind initially to DnaJ; upon interaction with the DnaJ-bound protein, DnaK hydrolyzes its bound ATP, resulting in the formation of a stable complex. GrpE releases ADP from DnaK; ATP binding to DnaK triggers the release of the substrate protein, thus completing the reaction cycle. Several rounds of ATP-dependent interactions between DnaJ, DnaK and GrpE are required for fully efficient folding. In Burkholderia vietnamiensis (strain G4 / LMG 22486) (Burkholderia cepacia (strain R1808)), this protein is Protein GrpE.